The following is an 89-amino-acid chain: uncharacterized protein (89 aa).

The next 2 membrane-spanning stretches (helical) occupy residues 11-31 (IFGA…PIAL) and 63-83 (AAIS…TVVF).

The protein resides in the cell membrane. This is an uncharacterized protein from Methanocaldococcus jannaschii (strain ATCC 43067 / DSM 2661 / JAL-1 / JCM 10045 / NBRC 100440) (Methanococcus jannaschii).